We begin with the raw amino-acid sequence, 570 residues long: Sulfite reductase [NADPH] hemoprotein beta-component (570 aa).

[4Fe-4S] cluster-binding residues include Cys-434, Cys-440, Cys-479, and Cys-483. Residue Cys-483 participates in siroheme binding.

The protein belongs to the nitrite and sulfite reductase 4Fe-4S domain family. Alpha(8)-beta(8). The alpha component is a flavoprotein, the beta component is a hemoprotein. Requires siroheme as cofactor. The cofactor is [4Fe-4S] cluster.

It catalyses the reaction hydrogen sulfide + 3 NADP(+) + 3 H2O = sulfite + 3 NADPH + 4 H(+). The protein operates within sulfur metabolism; hydrogen sulfide biosynthesis; hydrogen sulfide from sulfite (NADPH route): step 1/1. Component of the sulfite reductase complex that catalyzes the 6-electron reduction of sulfite to sulfide. This is one of several activities required for the biosynthesis of L-cysteine from sulfate. The sequence is that of Sulfite reductase [NADPH] hemoprotein beta-component from Salmonella paratyphi A (strain ATCC 9150 / SARB42).